A 375-amino-acid chain; its full sequence is Growth/differentiation factor 8 (375 aa).

Positions 1–23 (MQKLAVYVYIYLFMLISVDPVAL) are cleaved as a signal peptide. A propeptide spanning residues 24-266 (DDGSQPTENA…VTDTPKRSRR (243 aa)) is cleaved from the precursor. N-linked (GlcNAc...) asparagine glycosylation is present at Asn-71. Intrachain disulfides connect Cys-272-Cys-282, Cys-281-Cys-340, Cys-309-Cys-372, and Cys-313-Cys-374.

The protein belongs to the TGF-beta family. In terms of assembly, homodimer; disulfide-linked.

The protein localises to the secreted. Functionally, acts specifically as a negative regulator of skeletal muscle growth. This chain is Growth/differentiation factor 8 (MSTN), found in Anser anser anser (Western greylag goose).